We begin with the raw amino-acid sequence, 360 residues long: Histidinol-phosphate aminotransferase (360 aa).

Position 222 is an N6-(pyridoxal phosphate)lysine (Lys222).

The protein belongs to the class-II pyridoxal-phosphate-dependent aminotransferase family. Histidinol-phosphate aminotransferase subfamily. As to quaternary structure, homodimer. Pyridoxal 5'-phosphate is required as a cofactor.

It catalyses the reaction L-histidinol phosphate + 2-oxoglutarate = 3-(imidazol-4-yl)-2-oxopropyl phosphate + L-glutamate. The protein operates within amino-acid biosynthesis; L-histidine biosynthesis; L-histidine from 5-phospho-alpha-D-ribose 1-diphosphate: step 7/9. The protein is Histidinol-phosphate aminotransferase of Listeria innocua serovar 6a (strain ATCC BAA-680 / CLIP 11262).